The following is a 479-amino-acid chain: Glutamyl-tRNA(Gln) amidotransferase subunit A (479 aa).

Active-site charge relay system residues include Lys-75 and Ser-150. Catalysis depends on Ser-174, which acts as the Acyl-ester intermediate.

Belongs to the amidase family. GatA subfamily. As to quaternary structure, heterotrimer of A, B and C subunits.

It carries out the reaction L-glutamyl-tRNA(Gln) + L-glutamine + ATP + H2O = L-glutaminyl-tRNA(Gln) + L-glutamate + ADP + phosphate + H(+). In terms of biological role, allows the formation of correctly charged Gln-tRNA(Gln) through the transamidation of misacylated Glu-tRNA(Gln) in organisms which lack glutaminyl-tRNA synthetase. The reaction takes place in the presence of glutamine and ATP through an activated gamma-phospho-Glu-tRNA(Gln). This is Glutamyl-tRNA(Gln) amidotransferase subunit A from Synechococcus sp. (strain ATCC 27144 / PCC 6301 / SAUG 1402/1) (Anacystis nidulans).